A 398-amino-acid chain; its full sequence is Ornithine aminotransferase (398 aa).

An N6-(pyridoxal phosphate)lysine modification is found at Lys-256.

This sequence belongs to the class-III pyridoxal-phosphate-dependent aminotransferase family. OAT subfamily. The cofactor is pyridoxal 5'-phosphate.

The protein localises to the cytoplasm. It carries out the reaction a 2-oxocarboxylate + L-ornithine = L-glutamate 5-semialdehyde + an L-alpha-amino acid. Its pathway is amino-acid biosynthesis; L-proline biosynthesis; L-glutamate 5-semialdehyde from L-ornithine: step 1/1. Catalyzes the interconversion of ornithine to glutamate semialdehyde. This chain is Ornithine aminotransferase, found in Oceanobacillus iheyensis (strain DSM 14371 / CIP 107618 / JCM 11309 / KCTC 3954 / HTE831).